We begin with the raw amino-acid sequence, 175 residues long: Inorganic pyrophosphatase (175 aa).

Residues Lys30, Arg44, and Tyr56 each contribute to the substrate site. Mg(2+) contacts are provided by Asp66, Asp71, and Asp103. Residue Tyr140 participates in substrate binding.

It belongs to the PPase family. As to quaternary structure, homohexamer. It depends on Mg(2+) as a cofactor.

Its subcellular location is the cytoplasm. The enzyme catalyses diphosphate + H2O = 2 phosphate + H(+). Its function is as follows. Catalyzes the hydrolysis of inorganic pyrophosphate (PPi) forming two phosphate ions. In Thermus thermophilus (strain ATCC 27634 / DSM 579 / HB8), this protein is Inorganic pyrophosphatase.